Reading from the N-terminus, the 244-residue chain is HTH-type transcriptional repressor PhnF (244 aa).

The HTH gntR-type domain maps to 8-74; it reads RILKHQVVRA…RGRTTVVARP (67 aa). The H-T-H motif DNA-binding region spans 35-54; sequence EREIAEQFEVARETVRQALR.

The protein localises to the cytoplasm. Represses the phnDCE operon, involved in the uptake of phosphate, under conditions of phosphate availability in the cell. In Mycolicibacterium smegmatis (strain ATCC 700084 / mc(2)155) (Mycobacterium smegmatis), this protein is HTH-type transcriptional repressor PhnF (phnF).